Reading from the N-terminus, the 448-residue chain is Proteases secretion protein PrtE (448 aa).

At 1–30 (MTGMDITTQDELNEAAMRDRASRDEERALR) the chain is on the cytoplasmic side. The chain crosses the membrane as a helical span at residues 31–50 (LGWWLVLAGFGGFLLWALLA). Residues 51–448 (PLDKGVAVQG…DRMHLALTEE (398 aa)) lie on the Periplasmic side of the membrane.

Belongs to the membrane fusion protein (MFP) (TC 8.A.1) family.

The protein resides in the cell inner membrane. Involved in the secretion of proteases A, B, C and G. This is Proteases secretion protein PrtE (prtE) from Dickeya chrysanthemi (Pectobacterium chrysanthemi).